Here is a 250-residue protein sequence, read N- to C-terminus: Geranylgeranylglyceryl phosphate synthase (250 aa).

2 residues coordinate Mg(2+): Asp23 and Ser52. Sn-glycerol 1-phosphate contacts are provided by residues 170 to 176 (YIEAGSG), 202 to 203 (GG), and 224 to 225 (GT).

It belongs to the GGGP/HepGP synthase family. Group II subfamily. It depends on Mg(2+) as a cofactor.

It is found in the cytoplasm. It carries out the reaction sn-glycerol 1-phosphate + (2E,6E,10E)-geranylgeranyl diphosphate = sn-3-O-(geranylgeranyl)glycerol 1-phosphate + diphosphate. It functions in the pathway membrane lipid metabolism; glycerophospholipid metabolism. In terms of biological role, prenyltransferase that catalyzes the transfer of the geranylgeranyl moiety of geranylgeranyl diphosphate (GGPP) to the C3 hydroxyl of sn-glycerol-1-phosphate (G1P). This reaction is the first ether-bond-formation step in the biosynthesis of archaeal membrane lipids. This Methanobrevibacter smithii (strain ATCC 35061 / DSM 861 / OCM 144 / PS) protein is Geranylgeranylglyceryl phosphate synthase.